A 94-amino-acid polypeptide reads, in one-letter code: ESAT-6-like protein EsxL (94 aa).

Belongs to the WXG100 family. ESAT-6 subfamily. As to quaternary structure, strongly interacts with EsxK to form a heterodimeric complex under reducing conditions. The complex is regulated by the redox state of EsxL.

It localises to the secreted. Induces apoptosis of host cells. Is immunogenic with highly specific seroreactivity towards TB patients' serum. This is ESAT-6-like protein EsxL from Mycobacterium tuberculosis (strain ATCC 25618 / H37Rv).